We begin with the raw amino-acid sequence, 307 residues long: Elongation factor Ts (307 aa).

Positions 80-83 are involved in Mg(2+) ion dislocation from EF-Tu; it reads TDFV.

It belongs to the EF-Ts family.

It is found in the cytoplasm. Its function is as follows. Associates with the EF-Tu.GDP complex and induces the exchange of GDP to GTP. It remains bound to the aminoacyl-tRNA.EF-Tu.GTP complex up to the GTP hydrolysis stage on the ribosome. This Methylobacterium sp. (strain 4-46) protein is Elongation factor Ts.